An 84-amino-acid polypeptide reads, in one-letter code: DNA-directed RNA polymerase subunit Rpo5 (84 aa).

This sequence belongs to the archaeal Rpo5/eukaryotic RPB5 RNA polymerase subunit family. As to quaternary structure, part of the RNA polymerase complex.

It localises to the cytoplasm. The enzyme catalyses RNA(n) + a ribonucleoside 5'-triphosphate = RNA(n+1) + diphosphate. In terms of biological role, DNA-dependent RNA polymerase (RNAP) catalyzes the transcription of DNA into RNA using the four ribonucleoside triphosphates as substrates. This Saccharolobus islandicus (strain Y.N.15.51 / Yellowstone #2) (Sulfolobus islandicus) protein is DNA-directed RNA polymerase subunit Rpo5.